Here is a 258-residue protein sequence, read N- to C-terminus: Alpha- and beta-fibrinogenase stejnefibrase-1 (258 aa).

Residues 1 to 18 (MELIRVLANLLILQLSYA) form the signal peptide. A propeptide spanning residues 19 to 24 (QKSSEL) is cleaved from the precursor. Positions 25–249 (IIGGDECNID…HLDWIQNIIA (225 aa)) constitute a Peptidase S1 domain. 6 disulfides stabilise this stretch: Cys31-Cys163, Cys50-Cys66, Cys98-Cys256, Cys142-Cys210, Cys174-Cys189, and Cys200-Cys225. His65 functions as the Charge relay system in the catalytic mechanism. N-linked (GlcNAc...) asparagine glycosylation occurs at Asn103. Asp110 (charge relay system) is an active-site residue. Asn121, Asn122, Asn154, and Asn170 each carry an N-linked (GlcNAc...) asparagine glycan. Ser204 acts as the Charge relay system in catalysis.

It belongs to the peptidase S1 family. Snake venom subfamily. As to quaternary structure, monomer. As to expression, expressed by the venom gland.

The protein localises to the secreted. Its activity is inhibited by PMSF and p-nitrophenyl-p-guanidinobenzoate (NPGB). Functionally, snake venom serine protease. Degrades concomitantly alpha- (FGA) and beta-chains of fibrinogen (FGB). This is Alpha- and beta-fibrinogenase stejnefibrase-1 from Trimeresurus stejnegeri (Chinese green tree viper).